We begin with the raw amino-acid sequence, 382 residues long: tRNA (guanine-N(7)-)-methyltransferase non-catalytic subunit wuho (382 aa).

The interval 40–59 is disordered; sequence VKDTDAGNEPNGNQTQPTPA. Polar residues predominate over residues 49–59; sequence PNGNQTQPTPA. 2 WD repeats span residues 149 to 190 and 192 to 230; these read GHMS…ECFC and GHTE…ELSK.

This sequence belongs to the WD repeat TRM82 family. As to quaternary structure, forms a heterodimer with the catalytic subunit.

It localises to the nucleus. It participates in tRNA modification; N(7)-methylguanine-tRNA biosynthesis. Functionally, required for the formation of N(7)-methylguanine at position 46 (m7G46) in tRNA. In the complex, it is required to stabilize and induce conformational changes of the catalytic subunit. The sequence is that of tRNA (guanine-N(7)-)-methyltransferase non-catalytic subunit wuho from Anopheles gambiae (African malaria mosquito).